A 178-amino-acid chain; its full sequence is Large ribosomal subunit protein uL10 (178 aa).

Belongs to the universal ribosomal protein uL10 family. As to quaternary structure, part of the ribosomal stalk of the 50S ribosomal subunit. The N-terminus interacts with L11 and the large rRNA to form the base of the stalk. The C-terminus forms an elongated spine to which L12 dimers bind in a sequential fashion forming a multimeric L10(L12)X complex.

In terms of biological role, forms part of the ribosomal stalk, playing a central role in the interaction of the ribosome with GTP-bound translation factors. This Leuconostoc mesenteroides subsp. mesenteroides (strain ATCC 8293 / DSM 20343 / BCRC 11652 / CCM 1803 / JCM 6124 / NCDO 523 / NBRC 100496 / NCIMB 8023 / NCTC 12954 / NRRL B-1118 / 37Y) protein is Large ribosomal subunit protein uL10.